We begin with the raw amino-acid sequence, 128 residues long: Z-ring associated protein G (128 aa).

The helical transmembrane segment at 7–27 (EIWFSISIAFLIGTLCGVLVM) threads the bilayer. The stretch at 37-75 (QIQLKSELASAEAKIEEQKQQLERHFEQSANLLENLAED) forms a coiled coil. The tract at residues 105 to 128 (NHANGDEDNQPRDYSDGSSGLLKS) is disordered. A compositionally biased stretch (basic and acidic residues) spans 107 to 119 (ANGDEDNQPRDYS).

The protein belongs to the ZapG family. As to quaternary structure, homotetramer. In solution, is primarily monomeric but forms small amounts of stable tetramer and hexadecamer. The crystal structure of the cytosolic region shows a coiled-coil tetramer in the asymmetric unit that is very likely to be a physiologically relevant assembly of the protein.

The protein resides in the cell inner membrane. In terms of biological role, involved in cell division, cell envelope biogenesis and cell shape maintenance. The sequence is that of Z-ring associated protein G from Haemophilus ducreyi (strain 35000HP / ATCC 700724).